Here is a 304-residue protein sequence, read N- to C-terminus: Ornithine carbamoyltransferase (304 aa).

Carbamoyl phosphate is bound by residues S53–T56, Q80, R104, and H131–Q134. L-ornithine contacts are provided by residues N162, D219, and S223–M224. Carbamoyl phosphate-binding positions include C259–L260 and R287.

The protein belongs to the aspartate/ornithine carbamoyltransferase superfamily. OTCase family.

The protein resides in the cytoplasm. The enzyme catalyses carbamoyl phosphate + L-ornithine = L-citrulline + phosphate + H(+). The protein operates within amino-acid biosynthesis; L-arginine biosynthesis; L-arginine from L-ornithine and carbamoyl phosphate: step 1/3. Its function is as follows. Reversibly catalyzes the transfer of the carbamoyl group from carbamoyl phosphate (CP) to the N(epsilon) atom of ornithine (ORN) to produce L-citrulline. The sequence is that of Ornithine carbamoyltransferase from Nitrosococcus oceani (strain ATCC 19707 / BCRC 17464 / JCM 30415 / NCIMB 11848 / C-107).